Here is a 1149-residue protein sequence, read N- to C-terminus: ATP-dependent helicase/deoxyribonuclease subunit B (1149 aa).

Position 8 to 15 (8 to 15 (GRAGSGKS)) interacts with ATP. [4Fe-4S] cluster-binding residues include Cys788, Cys1106, Cys1109, and Cys1115.

This sequence belongs to the helicase family. AddB/RexB type 1 subfamily. As to quaternary structure, heterodimer of AddA and AddB. The cofactor is Mg(2+). Requires [4Fe-4S] cluster as cofactor.

In terms of biological role, the heterodimer acts as both an ATP-dependent DNA helicase and an ATP-dependent, dual-direction single-stranded exonuclease. Recognizes the chi site generating a DNA molecule suitable for the initiation of homologous recombination. The AddB subunit has 5' -&gt; 3' nuclease activity but not helicase activity. The protein is ATP-dependent helicase/deoxyribonuclease subunit B of Ruminiclostridium cellulolyticum (strain ATCC 35319 / DSM 5812 / JCM 6584 / H10) (Clostridium cellulolyticum).